The primary structure comprises 44 residues: Mu-conotoxin-like Cal 12.1.1e (44 aa).

Disulfide bonds link cysteine 3–cysteine 16, cysteine 11–cysteine 28, cysteine 18–cysteine 33, and cysteine 27–cysteine 38. Tryptophan 17 is modified (6'-bromotryptophan). Proline 23 carries the post-translational modification 4-hydroxyproline. Tryptophan 36 and tryptophan 37 each carry 6'-bromotryptophan. Proline 39 carries the post-translational modification 4-hydroxyproline. Tryptophan 43 bears the 6'-bromotryptophan mark.

In terms of tissue distribution, expressed by the venom duct.

The protein resides in the secreted. Its function is as follows. Mu-conotoxins block voltage-gated sodium channels. This toxin reversibly blocks voltage-gated sodium channel in cephalopods, with no alteration in the voltage dependence of sodium conductance or on the kinetics of inactivation. This Californiconus californicus (California cone) protein is Mu-conotoxin-like Cal 12.1.1e.